A 444-amino-acid chain; its full sequence is MKAREANFDGLVGPTHNYSGLSFGNVASEKNQANQSNPKQAAKQGLAKMKALADMGLVQGILAPQERPDVHTLRRLGFMGSDANVIEQAAKQAPKVLAACCSASSMWTANAATVSPSADTADGKVHFTPANLTNKFHRSIEHETTGRILQATFADKNHFAHHSALPAVEHFGDEGAANHTRFCHQYDEHGVEFFVYGRHAFDSRYPAPKKYPARHTFEACEAVVRLHQLTSDKVVIAQQNPDVIDQGVFHNDVIAVGNKNVLFCHEQAFLNQQAVYKELTAKVGGNFKIIEVPTSAITIEDAVTSYLFNSQLIEMPNGETLLILPEECRNNERVWAHVQTIINAKQGIDKVQIFDLKQSMANGGGPACLRLRVVLNEQELQAVNQSTLMNDTLFNRLNTWVDSHYRDTVTDADLADPQLVVESRAALDALTQILDLGSVYAFQR.

Residues 19 to 28, N110, and 137 to 138 contribute to the substrate site; these read SGLSFGNVAS and HR. The active site involves E174. Position 214 (R214) interacts with substrate. Residue H250 is part of the active site. The substrate site is built by D252 and N362. The Nucleophile role is filled by C368.

It belongs to the succinylarginine dihydrolase family. Homodimer.

The catalysed reaction is N(2)-succinyl-L-arginine + 2 H2O + 2 H(+) = N(2)-succinyl-L-ornithine + 2 NH4(+) + CO2. The protein operates within amino-acid degradation; L-arginine degradation via AST pathway; L-glutamate and succinate from L-arginine: step 2/5. Its function is as follows. Catalyzes the hydrolysis of N(2)-succinylarginine into N(2)-succinylornithine, ammonia and CO(2). This Photobacterium profundum (strain SS9) protein is N-succinylarginine dihydrolase.